The chain runs to 736 residues: Epithelial splicing regulatory protein 2 (736 aa).

RRM domains lie at 224–301 (TVIR…KATG), 325–405 (MIIR…RSTA), and 659–736 (ALVR…ACCE).

This sequence belongs to the ESRP family.

It is found in the nucleus. In terms of biological role, mRNA splicing factor that regulates the formation of epithelial cell-specific isoforms. Specifically regulates the expression of FGFR2-IIIb, an epithelial cell-specific isoform of fgfr2. Acts by directly binding specific sequences in mRNAs. Binds the GU-rich sequence motifs in the ISE/ISS-3, a cis-element regulatory region present in the mRNA of fgfr2. This is Epithelial splicing regulatory protein 2 (esrp2) from Danio rerio (Zebrafish).